Consider the following 67-residue polypeptide: Probable Sec-independent protein translocase protein TatE (67 aa).

The helical transmembrane segment at 1–21 (MEGISIAKLLIIGALIVLLFG) threads the bilayer. The segment at 44–67 (KDEDTSAARTTAEETPAERVSHKD) is disordered.

It belongs to the TatA/E family. TatE subfamily.

Its subcellular location is the cell inner membrane. Its function is as follows. Part of the twin-arginine translocation (Tat) system that transports large folded proteins containing a characteristic twin-arginine motif in their signal peptide across membranes. TatE shares overlapping functions with TatA. This is Probable Sec-independent protein translocase protein TatE from Pantoea ananatis (strain LMG 20103).